Here is a 546-residue protein sequence, read N- to C-terminus: Calcitonin receptor-like protein 1 (546 aa).

The Cytoplasmic portion of the chain corresponds to 1-171; the sequence is MADATSPFNV…EVARNARKLE (171 aa). Residues 172-192 traverse the membrane as a helical segment; sequence FVGLGLSLVSLILAISIFSYF. Topologically, residues 193–205 are extracellular; sequence RRLRVFRNLLHLH. The helical transmembrane segment at 206 to 226 threads the bilayer; sequence LMIAMLMVVILRLVLYIDLIF. Residues 227 to 251 are Cytoplasmic-facing; sequence TGENGPHTNSAEGKTINTMPIVCEG. Residues 252 to 272 form a helical membrane-spanning segment; the sequence is MFFFLEYFKTVTFCWMFLEGI. At 273 to 292 the chain is on the extracellular side; sequence YLNNQIVFGFFNSEPKLLPY. Residues 293 to 313 traverse the membrane as a helical segment; the sequence is FIAGYGIPLVHTMLWLLVVLI. Residues 314–333 lie on the Cytoplasmic side of the membrane; sequence KKDFKVERCLGSYYLEPEFW. Residues 334 to 354 form a helical membrane-spanning segment; the sequence is ILDGPRMAELVINLFFICNVI. At 355-377 the chain is on the extracellular side; sequence RVLYSKVRESNNTSEAGLKKSVK. Residues Asn-365 and Asn-366 are each glycosylated (N-linked (GlcNAc...) asparagine). The chain crosses the membrane as a helical span at residues 378-398; it reads AAMMLLPLLGVPNIMQTIPFA. Residues 399–403 are Cytoplasmic-facing; that stretch reads PTRDN. A helical membrane pass occupies residues 404-424; that stretch reads IMVFAVWTYTASFTYMYQGLM. The Extracellular segment spans residues 425–546; it reads VASIYCFTNK…EGSNRSTKSP (122 aa). 2 N-linked (GlcNAc...) asparagine glycosylation sites follow: Asn-472 and Asn-476. The interval 472-546 is disordered; it reads NGTANASAPQ…EGSNRSTKSP (75 aa). Residues 473–485 are compositionally biased toward polar residues; that stretch reads GTANASAPQTNNA. The span at 500–520 shows a compositional bias: basic and acidic residues; the sequence is KGSDDSTTKLMKDAVMEEEKN. N-linked (GlcNAc...) asparagine glycosylation occurs at Asn-540.

The protein belongs to the G-protein coupled receptor 2 family. Expression was observed in the mechanosensory neuron pairs PLM, ALM, FLP, OLQD, and OLQV, the chemosensory neurons PHA, PHB, RMEV, the ring motor neurons RMED, and the pharyngeal interneuron pair I1. Expression in sensory neurons PHA, PQR and URY are responsible for mate searching behavior. Expressed in AIY, RIM, RIA, and other neurons.

Its subcellular location is the cell membrane. Functionally, G-protein coupled receptor for PDF neuropeptides. Plays a role in responses to environmental signals, including chemicals and touch, and in modulating locomotory behaviors. Capable of transducing signals via an adenylate cyclase acy-1 cAMP-dependent pathway. Required to regulate the sex-specific expression of TGFbeta-like daf-7 in the ASJ chemosensory neurons, perhaps acting via acy-1. Involved in modulating mate searching behavior independent of nutritional status. In the presence of food, plays a role in initiating and extending exploratory roaming behavior, perhaps acting in AIY, RIM, RIA, and other neurons, in opposition to 5-hydroxytryptamine (serotonin) signaling. Involved in mediating arousal from the sleep-like state called lethargus, which occurs during molting between larval and adult stages, in part by regulating touch sensitivity. May play a role in circadian rhythms of locomotor activity. G-protein coupled receptor which is activated by neuropeptides PDF-1 and PDF-2. Probably acts through the G-alpha(s) type of G proteins to elevate cAMP levels. Its function is as follows. G-protein coupled receptor which is activated by neuropeptides PDF-1 and PDF-2; however, activation is lower compared to isoforms a and b. Probably inhibits cAMP levels through the G-alpha(i/o) type of G proteins. The polypeptide is Calcitonin receptor-like protein 1 (pdfr-1) (Caenorhabditis elegans).